The following is a 430-amino-acid chain: Formate-dependent phosphoribosylglycinamide formyltransferase (430 aa).

N(1)-(5-phospho-beta-D-ribosyl)glycinamide is bound by residues 26–27 (EL) and Glu-86. ATP contacts are provided by residues Arg-118, Lys-159, 199–202 (EEHI), and Glu-207. Positions 123-319 (ETLVKEAKVP…EFALHLRAVL (197 aa)) constitute an ATP-grasp domain. Glu-276 and Glu-288 together coordinate Mg(2+). Residues Asp-295, Lys-375, and 382–383 (RR) each bind N(1)-(5-phospho-beta-D-ribosyl)glycinamide.

This sequence belongs to the PurK/PurT family. In terms of assembly, homodimer.

The enzyme catalyses N(1)-(5-phospho-beta-D-ribosyl)glycinamide + formate + ATP = N(2)-formyl-N(1)-(5-phospho-beta-D-ribosyl)glycinamide + ADP + phosphate + H(+). Its pathway is purine metabolism; IMP biosynthesis via de novo pathway; N(2)-formyl-N(1)-(5-phospho-D-ribosyl)glycinamide from N(1)-(5-phospho-D-ribosyl)glycinamide (formate route): step 1/1. Functionally, involved in the de novo purine biosynthesis. Catalyzes the transfer of formate to 5-phospho-ribosyl-glycinamide (GAR), producing 5-phospho-ribosyl-N-formylglycinamide (FGAR). Formate is provided by PurU via hydrolysis of 10-formyl-tetrahydrofolate. In Pyrococcus horikoshii (strain ATCC 700860 / DSM 12428 / JCM 9974 / NBRC 100139 / OT-3), this protein is Formate-dependent phosphoribosylglycinamide formyltransferase.